The chain runs to 72 residues: Translation initiation factor IF-1 (72 aa).

Residues 1–72 (MSKEDVIELE…TRGRIVWRSK (72 aa)) enclose the S1-like domain.

The protein belongs to the IF-1 family. As to quaternary structure, component of the 30S ribosomal translation pre-initiation complex which assembles on the 30S ribosome in the order IF-2 and IF-3, IF-1 and N-formylmethionyl-tRNA(fMet); mRNA recruitment can occur at any time during PIC assembly.

Its subcellular location is the cytoplasm. One of the essential components for the initiation of protein synthesis. Stabilizes the binding of IF-2 and IF-3 on the 30S subunit to which N-formylmethionyl-tRNA(fMet) subsequently binds. Helps modulate mRNA selection, yielding the 30S pre-initiation complex (PIC). Upon addition of the 50S ribosomal subunit IF-1, IF-2 and IF-3 are released leaving the mature 70S translation initiation complex. In Caldicellulosiruptor saccharolyticus (strain ATCC 43494 / DSM 8903 / Tp8T 6331), this protein is Translation initiation factor IF-1.